The sequence spans 500 residues: Sulfate adenylyltransferase (500 aa).

The tract at residues 1 to 165 (MLSPHGGILQ…LEAIQLPAHY (165 aa)) is N-terminal. The catalytic stretch occupies residues 166 to 390 (DYLNLRKSPA…LRQYNPPRYR (225 aa)). Residue glutamine 193 participates in sulfate binding. ATP is bound by residues 193 to 196 (QTRN) and 287 to 290 (GRDH). Active-site residues include threonine 194, arginine 195, and asparagine 196. Sulfate is bound at residue arginine 195. Position 291 (alanine 291) interacts with sulfate. Isoleucine 329 is an ATP binding site. The segment at 391–500 (QGFVIVVNHE…FLEDNKFFQF (110 aa)) is required for oligomerization; adenylyl-sulfate kinase-like.

The protein belongs to the sulfate adenylyltransferase family. In terms of assembly, homohexamer. Dimer of trimers.

It is found in the cytoplasm. It catalyses the reaction sulfate + ATP + H(+) = adenosine 5'-phosphosulfate + diphosphate. The protein operates within sulfur metabolism; hydrogen sulfide biosynthesis; sulfite from sulfate: step 1/3. Catalyzes the first intracellular reaction of sulfate assimilation, forming adenosine-5'-phosphosulfate (APS) from inorganic sulfate and ATP. Plays an important role in sulfate activation as a component of the biosynthesis pathway of sulfur-containing amino acids. The polypeptide is Sulfate adenylyltransferase (Eremothecium gossypii (strain ATCC 10895 / CBS 109.51 / FGSC 9923 / NRRL Y-1056) (Yeast)).